The chain runs to 234 residues: tRNA1(Val) (adenine(37)-N6)-methyltransferase (234 aa).

It belongs to the methyltransferase superfamily. tRNA (adenine-N(6)-)-methyltransferase family.

It localises to the cytoplasm. It catalyses the reaction adenosine(37) in tRNA1(Val) + S-adenosyl-L-methionine = N(6)-methyladenosine(37) in tRNA1(Val) + S-adenosyl-L-homocysteine + H(+). In terms of biological role, specifically methylates the adenine in position 37 of tRNA(1)(Val) (anticodon cmo5UAC). This is tRNA1(Val) (adenine(37)-N6)-methyltransferase from Flavobacterium psychrophilum (strain ATCC 49511 / DSM 21280 / CIP 103535 / JIP02/86).